The primary structure comprises 178 residues: Fatty-acid and retinol-binding protein 1 (178 aa).

Residues 1–16 (MYHQLILLALIGTIMA) form the signal peptide. 2 coiled-coil regions span residues 67–89 (DAAL…ELRN) and 129–154 (IKQA…LKVT).

The protein belongs to the fatty-acid and retinol-binding protein (FARBP) family. Post-translationally, not glycosylated.

It localises to the secreted. In terms of biological role, binds retinol and different fatty acids. The sequence is that of Fatty-acid and retinol-binding protein 1 from Loa loa (Eye worm).